Reading from the N-terminus, the 513-residue chain is ATP synthase subunit alpha (513 aa).

169-176 (GDRQTGKT) provides a ligand contact to ATP.

Belongs to the ATPase alpha/beta chains family. F-type ATPases have 2 components, CF(1) - the catalytic core - and CF(0) - the membrane proton channel. CF(1) has five subunits: alpha(3), beta(3), gamma(1), delta(1), epsilon(1). CF(0) has three main subunits: a(1), b(2) and c(9-12). The alpha and beta chains form an alternating ring which encloses part of the gamma chain. CF(1) is attached to CF(0) by a central stalk formed by the gamma and epsilon chains, while a peripheral stalk is formed by the delta and b chains.

It is found in the cell membrane. The catalysed reaction is ATP + H2O + 4 H(+)(in) = ADP + phosphate + 5 H(+)(out). Its function is as follows. Produces ATP from ADP in the presence of a proton gradient across the membrane. The alpha chain is a regulatory subunit. This chain is ATP synthase subunit alpha, found in Polynucleobacter asymbioticus (strain DSM 18221 / CIP 109841 / QLW-P1DMWA-1) (Polynucleobacter necessarius subsp. asymbioticus).